Consider the following 323-residue polypeptide: 4-hydroxythreonine-4-phosphate dehydrogenase (323 aa).

Thr133 contributes to the substrate binding site. Residues His161, His206, and His261 each coordinate a divalent metal cation. 3 residues coordinate substrate: Lys269, Asn278, and Arg287.

Belongs to the PdxA family. Homodimer. Zn(2+) serves as cofactor. The cofactor is Mg(2+). Requires Co(2+) as cofactor.

The protein localises to the cytoplasm. It catalyses the reaction 4-(phosphooxy)-L-threonine + NAD(+) = 3-amino-2-oxopropyl phosphate + CO2 + NADH. Its pathway is cofactor biosynthesis; pyridoxine 5'-phosphate biosynthesis; pyridoxine 5'-phosphate from D-erythrose 4-phosphate: step 4/5. Functionally, catalyzes the NAD(P)-dependent oxidation of 4-(phosphooxy)-L-threonine (HTP) into 2-amino-3-oxo-4-(phosphooxy)butyric acid which spontaneously decarboxylates to form 3-amino-2-oxopropyl phosphate (AHAP). This Xanthomonas axonopodis pv. citri (strain 306) protein is 4-hydroxythreonine-4-phosphate dehydrogenase.